Reading from the N-terminus, the 396-residue chain is Septu protein PtuA (396 aa).

Its function is as follows. Component of antiviral defense system Septu type I, composed of PtuA and PtuB. Expression of Septu type I in B.subtilis (strain BEST7003) confers resistance to phages SBSphiC and SBSphiJ. May be an ATPase. This Bacillus thuringiensis protein is Septu protein PtuA.